The primary structure comprises 956 residues: MSMTASSSTPRPTPKYDDALILNLSSAAKIERIVDKVKSLSRERFAPEDFSFQWFRSISRVERTTDNNPSAATTAAATATVHSSVSSSAAAAASSEAGGTRVPCVDRWPFFPFRALLVTGTAGAGKTSSIQVLAANLDCVITGTTVIAAQNLSAILNRTRSAQVKTIYRVFGFVSKHVPLADSAVSHETLERYRVCEPHEETTIQRLQINDLLAYWPVIADIVDKCLNMWERKAASASAAAAAAACEDLSELCESNIIVIDECGLMLRYMLQVVVFFYYFYNALGDTRLYRERRVPCIICVGSPTQTEALESRYDHYTQNKSVRKGVDVLSALIQNEVLINYCDIADNWVMFIHNKRCTDLDFGDLLKYMEFGIPLKEEHVAYVDRFVRPPSSIRNPSYAAEMTRLFLSHVEVQAYFKRLHEQIRLSERHRLFDLPVYCVVNNRAYQELCELADPLGDSPQPVELWFRQNLARIINYSQFVDHNLSSEITKEALRPAADVVATNNPSVQAHGGGGSVIGSTGGNDETAFFQDDDTTTAPDSRETLLTLRITYIKGSSVGVNSKVRACVIGYQGTVERFVDILQKDTFIERTPCEQAAYAYSLVSGLLFSAMYYFYVSPYTTEEMLRELARVELPDVSSLCAAAAATAAAPAWSGGENPINNHVDADSSQGGQSVPVSQRMEHGQEETHDIPCLSNHHDDSDAITDAELMDHTSLYADPFFLKYVKPPSLALLSFEETVHMYTTFRDIFLKRYQLMQRLTGGRFATLPLVTYNRRNVVFKANCQISSQTGSFVGMLSHVSPAQTYTLEGYTSDNVLSLPSDRHRIHPEVVQRGLSRLVLRDALGFLFVLDVNVSRFVESAQGKSLHVCTTVDYGLTSRTAMTIAKSQGLSLEKVAVDFGDHPKNLKMSHIYVAMSRVTDPEHLMMNVNPLRLPYEKNTAITPYICRALKDKRTTLIF.

120–127 (GTAGAGKT) lines the ATP pocket. The disordered stretch occupies residues 658–694 (PINNHVDADSSQGGQSVPVSQRMEHGQEETHDIPCLS). Residues 667–678 (SSQGGQSVPVSQ) are compositionally biased toward low complexity. The span at 679 to 694 (RMEHGQEETHDIPCLS) shows a compositional bias: basic and acidic residues.

Belongs to the herpesviridae helicase family. Associates with the primase and the primase-associated factor to form the helicase-primase complex.

The protein localises to the host nucleus. Functionally, component of the helicase/primase complex. Unwinds the DNA at the replication forks and generates single-stranded DNA for both leading and lagging strand synthesis. The primase synthesizes short RNA primers on the lagging strand that the polymerase elongates using dNTPs. Possesses helicase-like motifs and therefore may act as the helicase subunit of the complex. The chain is DNA replication helicase from Human cytomegalovirus (strain Merlin) (HHV-5).